A 364-amino-acid polypeptide reads, in one-letter code: Fructose-bisphosphate aldolase A (364 aa).

The residue at position 5 (Tyr-5) is a Phosphotyrosine. Residue Thr-9 is modified to Phosphothreonine. Ser-36 and Ser-39 each carry phosphoserine. Lys-42 bears the N6-acetyllysine; alternate mark. Lys-42 participates in a covalent cross-link: Glycyl lysine isopeptide (Lys-Gly) (interchain with G-Cter in SUMO1); alternate. Lys-42 is covalently cross-linked (Glycyl lysine isopeptide (Lys-Gly) (interchain with G-Cter in SUMO2); alternate). Arg-43 contacts beta-D-fructose 1,6-bisphosphate. Ser-46 is subject to Phosphoserine. An N6-(2-hydroxyisobutyryl)lysine modification is found at Lys-99. N6-acetyllysine is present on Lys-108. Lys-111 carries the N6-acetyllysine; alternate modification. Lys-111 is subject to N6-malonyllysine; alternate. Ser-132 is subject to Phosphoserine. At Lys-147 the chain carries N6-(2-hydroxyisobutyryl)lysine. Glu-188 acts as the Proton acceptor in catalysis. The active-site Schiff-base intermediate with dihydroxyacetone-P is the Lys-230. Residue Ser-272 is modified to Phosphoserine. Beta-D-fructose 1,6-bisphosphate-binding positions include 272–274, Ser-301, and Arg-304; that span reads SGG. Residue Lys-312 is modified to N6-malonyllysine. The residue at position 330 (Lys-330) is an N6-acetyllysine.

Belongs to the class I fructose-bisphosphate aldolase family. In terms of assembly, homotetramer. Interacts with SNX9 and WAS. Interacts with FBP2; the interaction blocks FBP2 inhibition by physiological concentrations of AMP and reduces inhibition by Ca(2+). Expressed in muscle, brain and hepatoma cells.

The protein localises to the cytoplasm. It is found in the myofibril. The protein resides in the sarcomere. It localises to the i band. Its subcellular location is the m line. It catalyses the reaction beta-D-fructose 1,6-bisphosphate = D-glyceraldehyde 3-phosphate + dihydroxyacetone phosphate. Its pathway is carbohydrate degradation; glycolysis; D-glyceraldehyde 3-phosphate and glycerone phosphate from D-glucose: step 4/4. Functionally, catalyzes the reversible conversion of beta-D-fructose 1,6-bisphosphate (FBP) into two triose phosphate and plays a key role in glycolysis and gluconeogenesis. In addition, may also function as scaffolding protein. The polypeptide is Fructose-bisphosphate aldolase A (Aldoa) (Rattus norvegicus (Rat)).